The following is a 575-amino-acid chain: DNA mismatch repair protein MutL (575 aa).

This sequence belongs to the DNA mismatch repair MutL/HexB family.

This protein is involved in the repair of mismatches in DNA. It is required for dam-dependent methyl-directed DNA mismatch repair. May act as a 'molecular matchmaker', a protein that promotes the formation of a stable complex between two or more DNA-binding proteins in an ATP-dependent manner without itself being part of a final effector complex. In Coxiella burnetii (strain CbuG_Q212) (Coxiella burnetii (strain Q212)), this protein is DNA mismatch repair protein MutL.